We begin with the raw amino-acid sequence, 740 residues long: Folic acid synthesis protein fol1 (740 aa).

DHNA regions lie at residues 39 to 160 (DLIH…REID) and 161 to 280 (DQFF…SCFS). Residues 291–449 (IDNEAVYISL…EKIVDHDIKP (159 aa)) form an HPPK region. In terms of domain architecture, Pterin-binding spans 471–730 (TYIMAILNLT…DVYEMYKISK (260 aa)). Residues 473 to 740 (IMAILNLTPD…MSDAIWKEIY (268 aa)) form a DHPS region. Asn478 serves as a coordination point for Mg(2+). (7,8-dihydropterin-6-yl)methyl diphosphate contacts are provided by residues Thr517, Asp552, Asn571, Asp643, Lys683, and 718 to 720 (RVH).

The protein in the N-terminal section; belongs to the DHNA family. In the central section; belongs to the HPPK family. This sequence in the C-terminal section; belongs to the DHPS family. The cofactor is Mg(2+).

It catalyses the reaction 7,8-dihydroneopterin = 6-hydroxymethyl-7,8-dihydropterin + glycolaldehyde. The catalysed reaction is 6-hydroxymethyl-7,8-dihydropterin + ATP = (7,8-dihydropterin-6-yl)methyl diphosphate + AMP + H(+). It carries out the reaction (7,8-dihydropterin-6-yl)methyl diphosphate + 4-aminobenzoate = 7,8-dihydropteroate + diphosphate. The protein operates within cofactor biosynthesis; tetrahydrofolate biosynthesis; 2-amino-4-hydroxy-6-hydroxymethyl-7,8-dihydropteridine diphosphate from 7,8-dihydroneopterin triphosphate: step 3/4. It participates in cofactor biosynthesis; tetrahydrofolate biosynthesis; 2-amino-4-hydroxy-6-hydroxymethyl-7,8-dihydropteridine diphosphate from 7,8-dihydroneopterin triphosphate: step 4/4. Its pathway is cofactor biosynthesis; tetrahydrofolate biosynthesis; 7,8-dihydrofolate from 2-amino-4-hydroxy-6-hydroxymethyl-7,8-dihydropteridine diphosphate and 4-aminobenzoate: step 1/2. Its function is as follows. Catalyzes three sequential steps of tetrahydrofolate biosynthesis. This Pneumocystis carinii protein is Folic acid synthesis protein fol1 (fol1).